The primary structure comprises 84 residues: Cell division topological specificity factor (84 aa).

It belongs to the MinE family.

Prevents the cell division inhibition by proteins MinC and MinD at internal division sites while permitting inhibition at polar sites. This ensures cell division at the proper site by restricting the formation of a division septum at the midpoint of the long axis of the cell. The sequence is that of Cell division topological specificity factor from Pseudomonas syringae pv. syringae (strain B728a).